The following is a 688-amino-acid chain: Probable transcription factor gsfR1 (688 aa).

A compositionally biased stretch (acidic residues) spans 1–16; sequence MSDGPETAEGDTDDAV. Residues 1–95 form a disordered region; the sequence is MSDGPETAEG…TPVSSRGSIA (95 aa). Over residues 24–36 the composition is skewed to polar residues; it reads RVASESSARSQPR. A compositionally biased stretch (basic and acidic residues) spans 58–75; it reads EHSKEKNVSRRLPTEKTP.

It localises to the nucleus. Functionally, probable transcription factor that regulates expression of the gene cluster that mediates the biosynthesis of Griseofulvin, an important antifungal drug that has been in use for a long time for treating dermatophyte infections. The chain is Probable transcription factor gsfR1 from Penicillium aethiopicum.